We begin with the raw amino-acid sequence, 586 residues long: Arginine--tRNA ligase (586 aa).

A 'HIGH' region motif is present at residues 133 to 143 (ANPTGPLNIVS).

Belongs to the class-I aminoacyl-tRNA synthetase family. As to quaternary structure, monomer.

Its subcellular location is the cytoplasm. It catalyses the reaction tRNA(Arg) + L-arginine + ATP = L-arginyl-tRNA(Arg) + AMP + diphosphate. This is Arginine--tRNA ligase from Leptospira interrogans serogroup Icterohaemorrhagiae serovar copenhageni (strain Fiocruz L1-130).